A 267-amino-acid chain; its full sequence is uncharacterized protein (267 aa).

This sequence belongs to the glycosyltransferase 2 family.

This is an uncharacterized protein from Haemophilus influenzae (strain ATCC 51907 / DSM 11121 / KW20 / Rd).